A 91-amino-acid chain; its full sequence is Alpha-latrotoxin associated low molecular weight protein SGV150-311 (91 aa).

The N-terminal stretch at 1-18 (MNVLHFLILLMSVVSVFC) is a signal peptide.

The protein belongs to the arthropod CHH/MIH/GIH/VIH hormone family. As to expression, expressed by the venom gland.

It is found in the secreted. Its function is as follows. May increase the toxicity of alpha-latrotoxin and/or other venom components. Is non-toxic to mice and to the cockroach Periplaneta americana. The chain is Alpha-latrotoxin associated low molecular weight protein SGV150-311 from Steatoda grossa (False black widow).